We begin with the raw amino-acid sequence, 298 residues long: Octopine catabolism/uptake operon regulatory protein OccR (298 aa).

The 58-residue stretch at 1–58 folds into the HTH lysR-type domain; the sequence is MNLRQVEAFRAVMLTGQMTAAAELMLVTQPAISRLIKDFEQATKLQLFERRGNHIIPT. Residues 18–37 constitute a DNA-binding region (H-T-H motif); that stretch reads MTAAAELMLVTQPAISRLIK.

It belongs to the LysR transcriptional regulatory family.

Functionally, positive regulatory protein for the occ operon involved in octopine catabolism and uptake. Also acts as a negative regulator of its expression. This chain is Octopine catabolism/uptake operon regulatory protein OccR (occR), found in Agrobacterium tumefaciens (strain Ach5).